A 95-amino-acid chain; its full sequence is Small ribosomal subunit protein mS37 (95 aa).

Residues A27–K69 enclose the CHCH domain. 2 consecutive short sequence motifs (cx9C motif) follow at residues C30 to C40 and C51 to C61. 2 disulfides stabilise this stretch: C30-C61 and C40-C51.

The protein belongs to the mitochondrion-specific ribosomal protein mS37 family. Component of the mitochondrial small ribosomal subunit (mt-SSU). Mature yeast 74S mitochondrial ribosomes consist of a small (37S) and a large (54S) subunit. The 37S small subunit contains a 15S ribosomal RNA (15S mt-rRNA) and 34 different proteins. The 54S large subunit contains a 21S rRNA (21S mt-rRNA) and 46 different proteins.

It localises to the mitochondrion. The protein resides in the mitochondrion matrix. Functionally, component of the mitochondrial ribosome (mitoribosome), a dedicated translation machinery responsible for the synthesis of mitochondrial genome-encoded proteins, including at least some of the essential transmembrane subunits of the mitochondrial respiratory chain. The mitoribosomes are attached to the mitochondrial inner membrane and translation products are cotranslationally integrated into the membrane. The polypeptide is Small ribosomal subunit protein mS37 (MRP10) (Saccharomyces cerevisiae (strain ATCC 204508 / S288c) (Baker's yeast)).